The sequence spans 55 residues: Large ribosomal subunit protein bL33 (55 aa).

Positions 1-11 (MAKGGREKIKL) are enriched in basic and acidic residues. Positions 1 to 27 (MAKGGREKIKLESTAGTGHFYTTSKNK) are disordered. Positions 14 to 24 (TAGTGHFYTTS) are enriched in polar residues.

This sequence belongs to the bacterial ribosomal protein bL33 family.

This is Large ribosomal subunit protein bL33 from Dechloromonas aromatica (strain RCB).